We begin with the raw amino-acid sequence, 510 residues long: NAD(P)H-quinone oxidoreductase subunit 2 A, chloroplastic (510 aa).

13 consecutive transmembrane segments (helical) span residues 24 to 44 (LLLFDGSLIFPECILIFGLIL), 57 to 77 (IPWLYFISSTSLVMSITALLF), 99 to 119 (IFQFLILLCSTLCIPLSVEYI), 124 to 144 (MALTEFLLFILTATLGGMFLC), 149 to 169 (LITIFVAPECFSLCSYLLSGY), 183 to 203 (YLLMGGASSSILVHGFSWLYG), 227 to 247 (PGISIALIFITVGIGFKLSPA), 295 to 315 (WHLLLEILAILSMILGNLIAI), 323 to 343 (MLAYSSIGQIGYVIIGIIVGD), 354 to 374 (YMLFYISMNLGTFACIVLFGL), 395 to 415 (ALSLALCLLSLGGLPPLAGFF), 418 to 438 (IYLFWCGWQAGLYFLVLIGLL), and 484 to 504 (MIVCVIASTIPGISMNPIITI).

The protein belongs to the complex I subunit 2 family. In terms of assembly, NDH is composed of at least 16 different subunits, 5 of which are encoded in the nucleus.

It is found in the plastid. Its subcellular location is the chloroplast thylakoid membrane. It carries out the reaction a plastoquinone + NADH + (n+1) H(+)(in) = a plastoquinol + NAD(+) + n H(+)(out). The catalysed reaction is a plastoquinone + NADPH + (n+1) H(+)(in) = a plastoquinol + NADP(+) + n H(+)(out). In terms of biological role, NDH shuttles electrons from NAD(P)H:plastoquinone, via FMN and iron-sulfur (Fe-S) centers, to quinones in the photosynthetic chain and possibly in a chloroplast respiratory chain. The immediate electron acceptor for the enzyme in this species is believed to be plastoquinone. Couples the redox reaction to proton translocation, and thus conserves the redox energy in a proton gradient. The sequence is that of NAD(P)H-quinone oxidoreductase subunit 2 A, chloroplastic from Spinacia oleracea (Spinach).